Consider the following 177-residue polypeptide: Glia associated membrane protein glam-1 (177 aa).

The next 3 helical transmembrane spans lie at 19 to 39 (PLVVGLAVFGAIRSFVQFWMS), 42 to 62 (FGMAGTHFCVLLLDLLLLFGA), and 76 to 96 (VTFACVLIAIIRFMIYPVVFA).

The protein resides in the membrane. This is Glia associated membrane protein glam-1 from Caenorhabditis elegans.